The sequence spans 31 residues: Cyclotide vico-A (31 aa).

The segment at residues 1 to 31 is a cross-link (cyclopeptide (Gly-Asn)); that stretch reads GSIPCAESCVYIPCFTGIAGCSCKNKVCYYN. 3 disulfide bridges follow: C5–C21, C9–C23, and C14–C28.

Belongs to the cyclotide family. Bracelet subfamily. In terms of processing, this is a cyclic peptide.

Functionally, probably participates in a plant defense mechanism. This chain is Cyclotide vico-A, found in Viola cotyledon (Violeta).